Reading from the N-terminus, the 535-residue chain is Formate--tetrahydrofolate ligase (535 aa).

50-57 (TPAGEGKT) contributes to the ATP binding site.

This sequence belongs to the formate--tetrahydrofolate ligase family.

It catalyses the reaction (6S)-5,6,7,8-tetrahydrofolate + formate + ATP = (6R)-10-formyltetrahydrofolate + ADP + phosphate. Its pathway is one-carbon metabolism; tetrahydrofolate interconversion. The chain is Formate--tetrahydrofolate ligase from Picrophilus torridus (strain ATCC 700027 / DSM 9790 / JCM 10055 / NBRC 100828 / KAW 2/3).